Consider the following 419-residue polypeptide: Serine hydroxymethyltransferase (419 aa).

Residues Leu-121 and 125 to 127 (GHL) contribute to the (6S)-5,6,7,8-tetrahydrofolate site. The residue at position 230 (Lys-230) is an N6-(pyridoxal phosphate)lysine. Residues Glu-246 and 355-357 (SPF) contribute to the (6S)-5,6,7,8-tetrahydrofolate site.

Belongs to the SHMT family. In terms of assembly, homodimer. The cofactor is pyridoxal 5'-phosphate.

The protein resides in the cytoplasm. The enzyme catalyses (6R)-5,10-methylene-5,6,7,8-tetrahydrofolate + glycine + H2O = (6S)-5,6,7,8-tetrahydrofolate + L-serine. Its pathway is one-carbon metabolism; tetrahydrofolate interconversion. The protein operates within amino-acid biosynthesis; glycine biosynthesis; glycine from L-serine: step 1/1. Functionally, catalyzes the reversible interconversion of serine and glycine with tetrahydrofolate (THF) serving as the one-carbon carrier. This reaction serves as the major source of one-carbon groups required for the biosynthesis of purines, thymidylate, methionine, and other important biomolecules. Also exhibits THF-independent aldolase activity toward beta-hydroxyamino acids, producing glycine and aldehydes, via a retro-aldol mechanism. The sequence is that of Serine hydroxymethyltransferase from Streptococcus suis (strain 98HAH33).